Reading from the N-terminus, the 458-residue chain is Ammonium transporter Rh type B (458 aa).

At 1–13 the chain is on the cytoplasmic side; that stretch reads MAGSPSRAAGRRL. A helical transmembrane segment spans residues 14–34; that stretch reads QLPLLCLFLQGATAVLFAVFV. The Extracellular portion of the chain corresponds to 35–61; it reads RYNHKTDAALWHRSNHSNADNEFYFRY. The N-linked (GlcNAc...) asparagine glycan is linked to Asn-49. A helical membrane pass occupies residues 62–82; it reads PSFQDVHAMVFVGFGFLMVFL. At 83–86 the chain is on the cytoplasmic side; sequence QRYG. The helical transmembrane segment at 87–107 threads the bilayer; sequence FSSVGFTFLLAAFALQWSTLV. The Extracellular segment spans residues 108–124; the sequence is QGFLHSFHGGHIHVGVE. A helical membrane pass occupies residues 125-145; that stretch reads SMINADFCAGAVLISFGAVLG. Over 146 to 149 the chain is Cytoplasmic; sequence KTGP. A helical membrane pass occupies residues 150–170; it reads TQLLLMALLEVVLFGINEFVL. The Extracellular segment spans residues 171–178; it reads LHLLGVRD. A helical transmembrane segment spans residues 179–201; that stretch reads AGGSMTIHTFGAYFGLVLSRVLY. Over 202 to 219 the chain is Cytoplasmic; that stretch reads RPQLEKSKHRQGSVYHSD. A helical transmembrane segment spans residues 220-240; sequence LFAMIGTIFLWIFWPSFNAAL. Topologically, residues 241–251 are extracellular; it reads TALGAGQHRTA. A helical membrane pass occupies residues 252-272; sequence LNTYYSLAASTLGTFALSALV. At 273–282 the chain is on the cytoplasmic side; that stretch reads GEDGRLDMVH. The helical transmembrane segment at 283–303 threads the bilayer; that stretch reads IQNAALAGGVVVGTSSEMMLT. A topological domain (extracellular) is located at residue Pro-304. The helical transmembrane segment at 305 to 325 threads the bilayer; it reads FGALAAGFLAGTVSTLGYKFF. Residues 326-346 lie on the Cytoplasmic side of the membrane; sequence TPILESKFKVQDTCGVHNLHG. Residues 347–367 form a helical membrane-spanning segment; the sequence is MPGVLGALLGVLVAGLATHEA. The Extracellular segment spans residues 368 to 393; sequence YGDGLESVFPLIAEGQRSATSQAMHQ. Residues 394–414 form a helical membrane-spanning segment; the sequence is LFGLFVTLMFASVGGGLGGLL. At 415 to 458 the chain is on the cytoplasmic side; sequence LKLPFLDSPPDSQHYEDQVHWQVPGEHEDKAQRPLRVEEADTQA. Residues 416–424 are interaction with ANK3; the sequence is KLPFLDSPP. Residues 436-458 are disordered; that stretch reads QVPGEHEDKAQRPLRVEEADTQA.

It belongs to the ammonium transporter (TC 2.A.49) family. Rh subfamily. In terms of assembly, interacts (via C-terminus) with ANK2 and ANK3; required for targeting to the basolateral membrane. In terms of processing, N-glycosylated. Specifically expressed in kidney. Also detected in liver and ovary.

It localises to the cell membrane. It is found in the basolateral cell membrane. It carries out the reaction NH4(+)(in) = NH4(+)(out). It catalyses the reaction methylamine(out) = methylamine(in). The catalysed reaction is CO2(out) = CO2(in). Its function is as follows. Ammonium transporter involved in the maintenance of acid-base homeostasis. Transports ammonium and its related derivative methylammonium across the basolateral plasma membrane of epithelial cells likely contributing to renal transepithelial ammonia transport and ammonia metabolism. May transport either NH4(+) or NH3 ammonia species predominantly mediating an electrogenic NH4(+) transport. May act as a CO2 channel providing for renal acid secretion. The protein is Ammonium transporter Rh type B of Homo sapiens (Human).